Here is a 253-residue protein sequence, read N- to C-terminus: Proteasome subunit alpha type-3 (253 aa).

The disordered stretch occupies residues 230–253; it reads ELTEKARKAGDAANKDEDSDNETH. A compositionally biased stretch (basic and acidic residues) spans 231-253; sequence LTEKARKAGDAANKDEDSDNETH. Phosphoserine is present on Ser-248.

It belongs to the peptidase T1A family. The 26S proteasome consists of a 20S proteasome core and two 19S regulatory subunits. The 20S proteasome core is composed of 28 subunits that are arranged in four stacked rings, resulting in a barrel-shaped structure. The two end rings are each formed by seven alpha subunits, and the two central rings are each formed by seven beta subunits. The catalytic chamber with the active sites is on the inside of the barrel. Interacts with ntc.

It localises to the cytoplasm. Its subcellular location is the nucleus. Functionally, the proteasome is a multicatalytic proteinase complex which is characterized by its ability to cleave peptides with Arg, Phe, Tyr, Leu, and Glu adjacent to the leaving group at neutral or slightly basic pH. The proteasome has an ATP-dependent proteolytic activity. The polypeptide is Proteasome subunit alpha type-3 (Prosalpha7) (Drosophila melanogaster (Fruit fly)).